We begin with the raw amino-acid sequence, 187 residues long: Ribosome maturation factor RimM (187 aa).

One can recognise a PRC barrel domain in the interval 96 to 169 (EDEFFYADLE…KLVIDPTAAG (74 aa)).

Belongs to the RimM family. Binds ribosomal protein uS19.

It localises to the cytoplasm. Functionally, an accessory protein needed during the final step in the assembly of 30S ribosomal subunit, possibly for assembly of the head region. Essential for efficient processing of 16S rRNA. May be needed both before and after RbfA during the maturation of 16S rRNA. It has affinity for free ribosomal 30S subunits but not for 70S ribosomes. This is Ribosome maturation factor RimM from Sinorhizobium medicae (strain WSM419) (Ensifer medicae).